Reading from the N-terminus, the 292-residue chain is MFSGSIVALITPFTPDGEVDYISLKKLVDFHVDAGTDAIVSVGTTGESATLTVEEHVKVVAKTVEFAEGRLPIIAGTGANATHEAVTFSRLLNNTGIAGYLSVTPYYNKPTQEGLFLHYNAIAQETDIPVILYNVPGRTAVDMRPETVARLSEIKNIVALKDATGDLSRVAKHREMCKEGFVLLSGDDATGLEFVKLGGQGVISVTNNIAAADMAKMMHLALDGKFDEAAIINQRLMTLHKNLFIESSPIPVKWAAHKMGLIANGDLRLPLTQLSEPARPIVAQALSEACIY.

Thr-45 serves as a coordination point for pyruvate. Tyr-133 (proton donor/acceptor) is an active-site residue. Lys-161 serves as the catalytic Schiff-base intermediate with substrate. Ile-203 lines the pyruvate pocket.

The protein belongs to the DapA family. Homotetramer; dimer of dimers.

The protein localises to the cytoplasm. The enzyme catalyses L-aspartate 4-semialdehyde + pyruvate = (2S,4S)-4-hydroxy-2,3,4,5-tetrahydrodipicolinate + H2O + H(+). It functions in the pathway amino-acid biosynthesis; L-lysine biosynthesis via DAP pathway; (S)-tetrahydrodipicolinate from L-aspartate: step 3/4. Catalyzes the condensation of (S)-aspartate-beta-semialdehyde [(S)-ASA] and pyruvate to 4-hydroxy-tetrahydrodipicolinate (HTPA). In Vibrio cholerae serotype O1 (strain M66-2), this protein is 4-hydroxy-tetrahydrodipicolinate synthase.